Here is a 153-residue protein sequence, read N- to C-terminus: Urease accessory protein UreE (153 aa).

This sequence belongs to the UreE family.

Its subcellular location is the cytoplasm. Functionally, involved in urease metallocenter assembly. Binds nickel. Probably functions as a nickel donor during metallocenter assembly. This is Urease accessory protein UreE from Acetivibrio thermocellus (strain ATCC 27405 / DSM 1237 / JCM 9322 / NBRC 103400 / NCIMB 10682 / NRRL B-4536 / VPI 7372) (Clostridium thermocellum).